The chain runs to 284 residues: uncharacterized protein (284 aa).

A C3H1-type zinc finger spans residues 37 to 65 (NEKKLICFSIINGENCIYGPNCTYAHSLS).

This is an uncharacterized protein from Acanthamoeba polyphaga (Amoeba).